The chain runs to 1377 residues: Dicer-like protein 2 (1377 aa).

A Helicase ATP-binding domain is found at 23 to 203; sequence MFEASLQENI…LSMIESNMNA (181 aa). 36–43 is an ATP binding site; sequence MDTGSGKT. A DEAH box motif is present at residues 144–147; that stretch reads DEAH. In terms of domain architecture, Helicase C-terminal spans 367 to 544; it reads KLEALISFLS…ALALETMAEV (178 aa). Positions 563–657 constitute a Dicer dsRNA-binding fold domain; the sequence is AVARLHHFCS…LPLTRKPELR (95 aa). 2 RNase III domains span residues 916-1056 and 1090-1274; these read ATRL…MDGG and NDSL…VDSR. Residues E1129, D1260, and E1263 each contribute to the Mg(2+) site.

Belongs to the helicase family. Dicer subfamily. It depends on Mg(2+) as a cofactor. The cofactor is Mn(2+).

Functionally, dicer-like endonuclease involved in cleaving double-stranded RNA in the RNA interference (RNAi) pathway. Produces 21 to 25 bp dsRNAs (siRNAs) which target the selective destruction of homologous RNAs leading to sequence-specific suppression of gene expression, called post-transcriptional gene silencing (PTGS). Part of a broad host defense response against viral infection and transposons. The polypeptide is Dicer-like protein 2 (dcl2) (Aspergillus terreus (strain NIH 2624 / FGSC A1156)).